The sequence spans 355 residues: Dual-specificity RNA methyltransferase RlmN (355 aa).

Glu86 serves as the catalytic Proton acceptor. The Radical SAM core domain maps to 105 to 338 (KEARYTVCVS…CTIRESKGLD (234 aa)). Cys112 and Cys343 are disulfide-bonded. [4Fe-4S] cluster-binding residues include Cys119, Cys123, and Cys126. S-adenosyl-L-methionine is bound by residues 169–170 (GE), Ser201, 224–226 (SLH), and Asn300. Catalysis depends on Cys343, which acts as the S-methylcysteine intermediate.

Belongs to the radical SAM superfamily. RlmN family. Requires [4Fe-4S] cluster as cofactor.

The protein localises to the cytoplasm. It carries out the reaction adenosine(2503) in 23S rRNA + 2 reduced [2Fe-2S]-[ferredoxin] + 2 S-adenosyl-L-methionine = 2-methyladenosine(2503) in 23S rRNA + 5'-deoxyadenosine + L-methionine + 2 oxidized [2Fe-2S]-[ferredoxin] + S-adenosyl-L-homocysteine. It catalyses the reaction adenosine(37) in tRNA + 2 reduced [2Fe-2S]-[ferredoxin] + 2 S-adenosyl-L-methionine = 2-methyladenosine(37) in tRNA + 5'-deoxyadenosine + L-methionine + 2 oxidized [2Fe-2S]-[ferredoxin] + S-adenosyl-L-homocysteine. Functionally, specifically methylates position 2 of adenine 2503 in 23S rRNA and position 2 of adenine 37 in tRNAs. m2A2503 modification seems to play a crucial role in the proofreading step occurring at the peptidyl transferase center and thus would serve to optimize ribosomal fidelity. In Nitratiruptor sp. (strain SB155-2), this protein is Dual-specificity RNA methyltransferase RlmN.